The chain runs to 302 residues: Ribonuclease HII (302 aa).

In terms of domain architecture, RNase H type-2 spans 53 to 297 (EFEIGVDEVG…VQQAIEGTLA (245 aa)). 3 residues coordinate a divalent metal cation: Asp59, Glu60, and Asp163.

This sequence belongs to the RNase HII family. Requires Mn(2+) as cofactor. Mg(2+) is required as a cofactor.

It is found in the cytoplasm. It carries out the reaction Endonucleolytic cleavage to 5'-phosphomonoester.. Functionally, endonuclease that specifically degrades the RNA of RNA-DNA hybrids. The protein is Ribonuclease HII of Psychrobacter sp. (strain PRwf-1).